Reading from the N-terminus, the 97-residue chain is Antitoxin YafN (97 aa).

The protein belongs to the phD/YefM antitoxin family. In terms of assembly, probably forms a complex with the mRNA interferase YafO which inhibits the mRNA interferase activity.

Functionally, antitoxin component of a type II toxin-antitoxin (TA) system. Functions as an mRNA interferase antitoxin; overexpression prevents YafO-mediated cessation of cell growth and inhibition of cell proliferation. In Escherichia coli (strain K12), this protein is Antitoxin YafN (yafN).